The chain runs to 126 residues: Large ribosomal subunit protein bL12 (126 aa).

The protein belongs to the bacterial ribosomal protein bL12 family. Homodimer. Part of the ribosomal stalk of the 50S ribosomal subunit. Forms a multimeric L10(L12)X complex, where L10 forms an elongated spine to which 2 to 4 L12 dimers bind in a sequential fashion. Binds GTP-bound translation factors.

In terms of biological role, forms part of the ribosomal stalk which helps the ribosome interact with GTP-bound translation factors. Is thus essential for accurate translation. The chain is Large ribosomal subunit protein bL12 from Nocardia farcinica (strain IFM 10152).